A 294-amino-acid chain; its full sequence is Acetyl-coenzyme A carboxylase carboxyl transferase subunit beta (294 aa).

Positions 25 to 294 (VWTKCTACEQ…PFLEPEIIAD (270 aa)) constitute a CoA carboxyltransferase N-terminal domain. The Zn(2+) site is built by cysteine 29, cysteine 32, cysteine 48, and cysteine 51. The C4-type zinc finger occupies 29-51 (CTACEQVLYRDELKRHLEVCPKC).

Belongs to the AccD/PCCB family. Acetyl-CoA carboxylase is a heterohexamer composed of biotin carboxyl carrier protein (AccB), biotin carboxylase (AccC) and two subunits each of ACCase subunit alpha (AccA) and ACCase subunit beta (AccD). It depends on Zn(2+) as a cofactor.

It localises to the cytoplasm. The catalysed reaction is N(6)-carboxybiotinyl-L-lysyl-[protein] + acetyl-CoA = N(6)-biotinyl-L-lysyl-[protein] + malonyl-CoA. Its pathway is lipid metabolism; malonyl-CoA biosynthesis; malonyl-CoA from acetyl-CoA: step 1/1. Functionally, component of the acetyl coenzyme A carboxylase (ACC) complex. Biotin carboxylase (BC) catalyzes the carboxylation of biotin on its carrier protein (BCCP) and then the CO(2) group is transferred by the transcarboxylase to acetyl-CoA to form malonyl-CoA. The polypeptide is Acetyl-coenzyme A carboxylase carboxyl transferase subunit beta (Actinobacillus succinogenes (strain ATCC 55618 / DSM 22257 / CCUG 43843 / 130Z)).